The chain runs to 218 residues: Adenylate kinase (218 aa).

ATP is bound at residue 10-15 (GAGKGT). The NMP stretch occupies residues 30–59 (STGDMLRAAVKAGTPLGLQAKAVMDAGQLV). AMP is bound by residues Thr31, Arg36, 57–59 (QLV), 85–88 (GFPR), and Gln92. The interval 122 to 159 (GRRSHPASGRTYHVKFNPPKVEGKDDVTGEPLVQREDD) is LID. ATP is bound by residues Arg123 and 132-133 (TY). A disordered region spans residues 127-150 (PASGRTYHVKFNPPKVEGKDDVTG). AMP contacts are provided by Arg156 and Arg167. Gly203 contributes to the ATP binding site.

This sequence belongs to the adenylate kinase family. Monomer.

It is found in the cytoplasm. The enzyme catalyses AMP + ATP = 2 ADP. It participates in purine metabolism; AMP biosynthesis via salvage pathway; AMP from ADP: step 1/1. Functionally, catalyzes the reversible transfer of the terminal phosphate group between ATP and AMP. Plays an important role in cellular energy homeostasis and in adenine nucleotide metabolism. The protein is Adenylate kinase of Acidovorax ebreus (strain TPSY) (Diaphorobacter sp. (strain TPSY)).